The primary structure comprises 530 residues: Ubiquitin carboxyl-terminal hydrolase 17-like protein 11 (530 aa).

The USP domain occupies 80–375 (AGLQNMGNTC…QAYVLFYIQK (296 aa)). Cys-89 (nucleophile) is an active-site residue. Residue His-334 is the Proton acceptor of the active site. Basic and acidic residues-rich tracts occupy residues 382–392 (SESVSRGREPR) and 398–413 (DTDR…RDHP). Disordered regions lie at residues 382 to 413 (SESV…RDHP) and 509 to 530 (RGRA…LVCQ). Basic residues predominate over residues 510–524 (GRARRSKGKNKHSKR).

The protein belongs to the peptidase C19 family. USP17 subfamily.

It localises to the nucleus. Its subcellular location is the endoplasmic reticulum. The enzyme catalyses Thiol-dependent hydrolysis of ester, thioester, amide, peptide and isopeptide bonds formed by the C-terminal Gly of ubiquitin (a 76-residue protein attached to proteins as an intracellular targeting signal).. In terms of biological role, deubiquitinating enzyme that removes conjugated ubiquitin from specific proteins to regulate different cellular processes that may include cell proliferation, progression through the cell cycle, apoptosis, cell migration, and the cellular response to viral infection. The polypeptide is Ubiquitin carboxyl-terminal hydrolase 17-like protein 11 (USP17L11) (Homo sapiens (Human)).